The chain runs to 613 residues: Autophagy-related protein 22-2 (613 aa).

The tract at residues 1 to 28 is disordered; that stretch reads MVLNSTPPASPGAEAQQRPPRYPGEDTA. A helical membrane pass occupies residues 41 to 61; the sequence is YGIAAEVFAVCGVGSFLPLTL. The span at 80-96 shows a compositional bias: polar residues; sequence GSSSPSTAPGNGTTTAT. A disordered region spans residues 80–99; sequence GSSSPSTAPGNGTTTATLRR. The N-linked (GlcNAc...) asparagine glycan is linked to N90. The next 3 membrane-spanning stretches (helical) occupy residues 120 to 140, 155 to 177, and 189 to 209; these read SFAM…LISF, LAFG…PVYI, and CLGS…ANDP. The segment at 216-257 is disordered; it reads KEEGEELSPVNSSGEFARSEDLDEENVRDSDDHFTTGHGLKT. N-linked (GlcNAc...) asparagine glycosylation occurs at N226. Over residues 232–250 the composition is skewed to basic and acidic residues; the sequence is ARSEDLDEENVRDSDDHFT. The next 4 helical transmembrane spans lie at 278–298, 307–327, 382–402, and 418–438; these read VGLG…MLFA, ISGT…WFSF, VIVF…VSGT, and VGLL…LWPV. N448 carries an N-linked (GlcNAc...) asparagine glycan. 4 helical membrane-spanning segments follow: residues 453 to 473, 488 to 510, 522 to 544, and 553 to 573; these read LCIA…IPLF, FPLG…SFFG, YALY…GMLI, and GFFF…MVNA. The segment at 592 to 613 is disordered; the sequence is GEHASEYGGPSEEAEGLLARDI.

It belongs to the ATG22 family.

The protein resides in the vacuole membrane. Functionally, vacuolar effluxer which mediate the efflux of amino acids resulting from autophagic degradation. The release of autophagic amino acids allows the maintenance of protein synthesis and viability during nitrogen starvation. The protein is Autophagy-related protein 22-2 (atg22-2) of Neosartorya fischeri (strain ATCC 1020 / DSM 3700 / CBS 544.65 / FGSC A1164 / JCM 1740 / NRRL 181 / WB 181) (Aspergillus fischerianus).